The chain runs to 71 residues: Conotoxin Vc6.12 (71 aa).

Residues 1–19 form the signal peptide; the sequence is MQKLIILLLVAAVLMSTQA. A propeptide spanning residues 20 to 43 is cleaved from the precursor; sequence LFQEKRPMKKINFLSKGKTDAEKQ. Disulfide bonds link C48-C62, C55-C66, and C61-C70.

It belongs to the conotoxin O2 superfamily. As to expression, expressed by the venom duct.

It is found in the secreted. Its function is as follows. Inhibits voltage-gated ion channels. This is Conotoxin Vc6.12 from Conus victoriae (Queen Victoria cone).